The chain runs to 172 residues: Ribosome maturation factor RimM (172 aa).

Positions 96-168 (EGEFYYHQII…RVDVELMEGL (73 aa)) constitute a PRC barrel domain.

This sequence belongs to the RimM family. As to quaternary structure, binds ribosomal protein uS19.

It localises to the cytoplasm. Its function is as follows. An accessory protein needed during the final step in the assembly of 30S ribosomal subunit, possibly for assembly of the head region. Essential for efficient processing of 16S rRNA. May be needed both before and after RbfA during the maturation of 16S rRNA. It has affinity for free ribosomal 30S subunits but not for 70S ribosomes. The protein is Ribosome maturation factor RimM of Streptococcus pyogenes serotype M18 (strain MGAS8232).